Reading from the N-terminus, the 186-residue chain is Peptidyl-tRNA hydrolase (186 aa).

Tyr14 is a tRNA binding site. His19 serves as the catalytic Proton acceptor. Residues Tyr64, Asn66, and Asn113 each contribute to the tRNA site.

The protein belongs to the PTH family. In terms of assembly, monomer.

The protein localises to the cytoplasm. It carries out the reaction an N-acyl-L-alpha-aminoacyl-tRNA + H2O = an N-acyl-L-amino acid + a tRNA + H(+). In terms of biological role, hydrolyzes ribosome-free peptidyl-tRNAs (with 1 or more amino acids incorporated), which drop off the ribosome during protein synthesis, or as a result of ribosome stalling. Functionally, catalyzes the release of premature peptidyl moieties from peptidyl-tRNA molecules trapped in stalled 50S ribosomal subunits, and thus maintains levels of free tRNAs and 50S ribosomes. The polypeptide is Peptidyl-tRNA hydrolase (Agathobacter rectalis (strain ATCC 33656 / DSM 3377 / JCM 17463 / KCTC 5835 / VPI 0990) (Eubacterium rectale)).